A 136-amino-acid polypeptide reads, in one-letter code: MMDQEEKTEEGSGPCAEAGSPDQEGFFNLLSHVQGDRMEGQRCSLQAGPGQTTKSQSDPTPEMDSLMDMLASTQGRRMDDQRVTVSSLPGFQPVGSKDGAQKRAGTLSPQPLLTPQDPTALGFRRNSSPQPPTQAP.

Disordered stretches follow at residues 1–64 (MMDQ…PEMD) and 86–136 (SSLP…TQAP). A GoLoco 1 domain is found at 23-45 (QEGFFNLLSHVQGDRMEGQRCSL). Residues 49-59 (PGQTTKSQSDP) show a composition bias toward polar residues. The 23-residue stretch at 63-85 (MDSLMDMLASTQGRRMDDQRVTV) folds into the GoLoco 2 domain. Residues 107–117 (LSPQPLLTPQD) show a composition bias toward polar residues. At S127 the chain carries Phosphoserine.

In terms of biological role, may function as a cell-type specific modulator for G protein-mediated cell signaling. This chain is Purkinje cell protein 2 homolog (PCP2), found in Homo sapiens (Human).